A 374-amino-acid polypeptide reads, in one-letter code: Retron Eco8 reverse transcriptase (374 aa).

Residues 25 to 252 (ENIITQSAIP…KEISINGYVI (228 aa)) enclose the Reverse transcriptase domain. The Mg(2+) site is built by Asp107, Asp200, and Asp201.

The protein belongs to the bacterial reverse transcriptase family.

The enzyme catalyses DNA(n) + a 2'-deoxyribonucleoside 5'-triphosphate = DNA(n+1) + diphosphate. Reverse transcriptase (RT) component of antiviral defense system retron Eco8, composed of this RT, the following endonuclease and a non-coding RNA (ncRNA) encoded between them. Expression of retron Eco8 confers protection against bacteriophages T4, T6, T7 and SECphi4, SECphi6 and SECphi18. At multiplicity of infection (MOI) of 0.02 cultures slow growth when infected with SECphi4 but do not collapse, at MOI 2 cultures collapse. Responsible for synthesis of msDNA (a branched molecule with RNA linked by a 2',5'-phosphodiester bond to ssDNA). The retron transcript serves as primer (from a conserved internal G residue) and template for the reaction, and codes for the RT. The sequence is that of Retron Eco8 reverse transcriptase from Escherichia coli.